The primary structure comprises 425 residues: Serine hydroxymethyltransferase (425 aa).

(6S)-5,6,7,8-tetrahydrofolate-binding positions include L123 and 127 to 129 (GHL). An N6-(pyridoxal phosphate)lysine modification is found at K232. (6S)-5,6,7,8-tetrahydrofolate is bound at residue E248.

Belongs to the SHMT family. In terms of assembly, homodimer. Pyridoxal 5'-phosphate is required as a cofactor.

Its subcellular location is the cytoplasm. The catalysed reaction is (6R)-5,10-methylene-5,6,7,8-tetrahydrofolate + glycine + H2O = (6S)-5,6,7,8-tetrahydrofolate + L-serine. It functions in the pathway one-carbon metabolism; tetrahydrofolate interconversion. Its pathway is amino-acid biosynthesis; glycine biosynthesis; glycine from L-serine: step 1/1. In terms of biological role, catalyzes the reversible interconversion of serine and glycine with tetrahydrofolate (THF) serving as the one-carbon carrier. This reaction serves as the major source of one-carbon groups required for the biosynthesis of purines, thymidylate, methionine, and other important biomolecules. Also exhibits THF-independent aldolase activity toward beta-hydroxyamino acids, producing glycine and aldehydes, via a retro-aldol mechanism. The chain is Serine hydroxymethyltransferase from Anaplasma phagocytophilum (strain HZ).